A 154-amino-acid polypeptide reads, in one-letter code: Ribonuclease H (154 aa).

An RNase H type-1 domain is found at 5–147; sequence GKSRVAIYTD…ADMLARGEVE (143 aa). Mg(2+)-binding residues include D14, E53, D75, and D139.

It belongs to the RNase H family. Monomer. The cofactor is Mg(2+).

Its subcellular location is the cytoplasm. The catalysed reaction is Endonucleolytic cleavage to 5'-phosphomonoester.. Its function is as follows. Endonuclease that specifically degrades the RNA of RNA-DNA hybrids. The chain is Ribonuclease H from Anaplasma marginale (strain St. Maries).